Consider the following 527-residue polypeptide: Bifunctional purine biosynthesis protein PurH (527 aa).

An MGS-like domain is found at 8-156; it reads AGAKRPIRRA…KNHPSVAVVV (149 aa).

Belongs to the PurH family.

The catalysed reaction is (6R)-10-formyltetrahydrofolate + 5-amino-1-(5-phospho-beta-D-ribosyl)imidazole-4-carboxamide = 5-formamido-1-(5-phospho-D-ribosyl)imidazole-4-carboxamide + (6S)-5,6,7,8-tetrahydrofolate. The enzyme catalyses IMP + H2O = 5-formamido-1-(5-phospho-D-ribosyl)imidazole-4-carboxamide. The protein operates within purine metabolism; IMP biosynthesis via de novo pathway; 5-formamido-1-(5-phospho-D-ribosyl)imidazole-4-carboxamide from 5-amino-1-(5-phospho-D-ribosyl)imidazole-4-carboxamide (10-formyl THF route): step 1/1. It functions in the pathway purine metabolism; IMP biosynthesis via de novo pathway; IMP from 5-formamido-1-(5-phospho-D-ribosyl)imidazole-4-carboxamide: step 1/1. The sequence is that of Bifunctional purine biosynthesis protein PurH from Mycobacterium sp. (strain KMS).